Consider the following 319-residue polypeptide: Ribosomal RNA small subunit methyltransferase H (319 aa).

S-adenosyl-L-methionine is bound by residues G39–H41, D59, F83, D104, and Q111.

It belongs to the methyltransferase superfamily. RsmH family.

The protein localises to the cytoplasm. The enzyme catalyses cytidine(1402) in 16S rRNA + S-adenosyl-L-methionine = N(4)-methylcytidine(1402) in 16S rRNA + S-adenosyl-L-homocysteine + H(+). Its function is as follows. Specifically methylates the N4 position of cytidine in position 1402 (C1402) of 16S rRNA. The sequence is that of Ribosomal RNA small subunit methyltransferase H from Ralstonia pickettii (strain 12J).